We begin with the raw amino-acid sequence, 728 residues long: 1,4-alpha-glucan branching enzyme GlgB (728 aa).

D405 serves as the catalytic Nucleophile. E458 (proton donor) is an active-site residue.

The protein belongs to the glycosyl hydrolase 13 family. GlgB subfamily. In terms of assembly, monomer.

The catalysed reaction is Transfers a segment of a (1-&gt;4)-alpha-D-glucan chain to a primary hydroxy group in a similar glucan chain.. The protein operates within glycan biosynthesis; glycogen biosynthesis. In terms of biological role, catalyzes the formation of the alpha-1,6-glucosidic linkages in glycogen by scission of a 1,4-alpha-linked oligosaccharide from growing alpha-1,4-glucan chains and the subsequent attachment of the oligosaccharide to the alpha-1,6 position. This is 1,4-alpha-glucan branching enzyme GlgB from Escherichia coli O139:H28 (strain E24377A / ETEC).